The sequence spans 498 residues: Lysine--tRNA ligase (498 aa).

Residues E401 and E408 each contribute to the Mg(2+) site.

It belongs to the class-II aminoacyl-tRNA synthetase family. In terms of assembly, homodimer. Requires Mg(2+) as cofactor.

The protein resides in the cytoplasm. It catalyses the reaction tRNA(Lys) + L-lysine + ATP = L-lysyl-tRNA(Lys) + AMP + diphosphate. In Dehalococcoides mccartyi (strain ATCC BAA-2100 / JCM 16839 / KCTC 5957 / BAV1), this protein is Lysine--tRNA ligase.